Here is a 573-residue protein sequence, read N- to C-terminus: Multidrug and toxin extrusion protein 2 (573 aa).

Residues 1 to 46 (MEPAEDSLGATIQPPELVRVPRGRSLRILLGLRGALSPDVRREAAA) lie on the Cytoplasmic side of the membrane. The helical transmembrane segment at 47 to 67 (LVALAGPVFLAQLMIFLISIV) threads the bilayer. Over 68 to 81 (SSIFCGHLGKVELD) the chain is Extracellular. A helical transmembrane segment spans residues 82–102 (AVTLAVSVVNVTGISVGTGLA). Residues 103 to 122 (SACDTLMSQSFGGKNLKRVG) lie on the Cytoplasmic side of the membrane. The helical transmembrane segment at 123-143 (VILQRGILILLLCCFPCWAIF) threads the bilayer. Topologically, residues 144–161 (LNTERLLLLLRQDPDVAR) are extracellular. Residues 162-182 (LAQVYVMICIPALPAAFLFQL) traverse the membrane as a helical segment. Residues 183–196 (QTRYLQSQGIIMPQ) lie on the Cytoplasmic side of the membrane. The chain crosses the membrane as a helical span at residues 197 to 217 (VIVGIAANVVNVGMNAFLLYA). Over 218-225 (LDLGVVGS) the chain is Extracellular. A helical membrane pass occupies residues 226 to 246 (AWANTTSQFFLSALLFLYVWW). Residues 247-266 (KRIHIHTWGGWTRECFQEWS) are Cytoplasmic-facing. The chain crosses the membrane as a helical span at residues 267–286 (SYTRLAIPSMFMVCIEWWTF). Topologically, residues 287–304 (EIGTFLAGLVNVTELGAQ) are extracellular. The helical transmembrane segment at 305-325 (AVIYELASVAYMVPFGFGVAA) threads the bilayer. At 326–345 (SVRVGNALGAGNADQARCSC) the chain is on the cytoplasmic side. A helical transmembrane segment spans residues 346–366 (TTVLLCAGVCALLVGILLAAL). Residues 367–379 (KDVVAYIFTNDKD) are Extracellular-facing. The helical transmembrane segment at 380–400 (IISLVSQVMPIFAPFHLFDAL) threads the bilayer. The Cytoplasmic segment spans residues 401–415 (AGTCGGVLRGTGKQK). A helical transmembrane segment spans residues 416–436 (IGAVLNTIGYYGFGFPIGVSL). The Extracellular portion of the chain corresponds to 437–443 (MFAAKLG). A helical membrane pass occupies residues 444 to 464 (IIGLWAGLIVCVSFQAFSYLI). The Cytoplasmic portion of the chain corresponds to 465 to 545 (YILRTNWSRV…VGEVLTGRQL (81 aa)). The chain crosses the membrane as a helical span at residues 546–566 (VFYRGMALTVSVAVLIAGIVV). Over 567–573 (RVFNDRG) the chain is Extracellular.

It belongs to the multi antimicrobial extrusion (MATE) (TC 2.A.66.1) family. As to expression, expressed in testis; especially in testicular Leydig cells.

Its subcellular location is the cell membrane. Functionally, multidrug efflux pump that functions as a H(+)/organic cation antiporter. May mediate testosterone efflux from the Leydig cells in the testes. In Mus musculus (Mouse), this protein is Multidrug and toxin extrusion protein 2 (Slc47a2).